Here is a 171-residue protein sequence, read N- to C-terminus: ATP synthase subunit b (171 aa).

Residues 2–22 (FLVKMVLGFLILLSPLCATGL) traverse the membrane as a helical segment.

This sequence belongs to the ATPase B chain family. In terms of assembly, F-type ATPases have 2 components, F(1) - the catalytic core - and F(0) - the membrane proton channel. F(1) has five subunits: alpha(3), beta(3), gamma(1), delta(1), epsilon(1). F(0) has three main subunits: a(1), b(2) and c(10-14). The alpha and beta chains form an alternating ring which encloses part of the gamma chain. F(1) is attached to F(0) by a central stalk formed by the gamma and epsilon chains, while a peripheral stalk is formed by the delta and b chains.

It localises to the cell inner membrane. Functionally, f(1)F(0) ATP synthase produces ATP from ADP in the presence of a proton or sodium gradient. F-type ATPases consist of two structural domains, F(1) containing the extramembraneous catalytic core and F(0) containing the membrane proton channel, linked together by a central stalk and a peripheral stalk. During catalysis, ATP synthesis in the catalytic domain of F(1) is coupled via a rotary mechanism of the central stalk subunits to proton translocation. In terms of biological role, component of the F(0) channel, it forms part of the peripheral stalk, linking F(1) to F(0). The sequence is that of ATP synthase subunit b from Helicobacter pylori (strain HPAG1).